The chain runs to 206 residues: Large ribosomal subunit protein uL3 (206 aa).

The tract at residues 127-151 is disordered; the sequence is SGGPSSHGSKFHRHLGGTGQATTPA.

Belongs to the universal ribosomal protein uL3 family. As to quaternary structure, part of the 50S ribosomal subunit. Forms a cluster with proteins L14 and L19.

One of the primary rRNA binding proteins, it binds directly near the 3'-end of the 23S rRNA, where it nucleates assembly of the 50S subunit. The sequence is that of Large ribosomal subunit protein uL3 from Borrelia garinii subsp. bavariensis (strain ATCC BAA-2496 / DSM 23469 / PBi) (Borreliella bavariensis).